A 448-amino-acid chain; its full sequence is Probable cytosolic Fe-S cluster assembly factor Bm6838 (448 aa).

Positions 27, 66, 69, 72, 170, 226, 370, and 374 each coordinate [4Fe-4S] cluster.

This sequence belongs to the NARF family.

In terms of biological role, component of the cytosolic iron-sulfur (Fe/S) protein assembly machinery. Required for maturation of extramitochondrial Fe/S proteins. This chain is Probable cytosolic Fe-S cluster assembly factor Bm6838, found in Brugia malayi (Filarial nematode worm).